We begin with the raw amino-acid sequence, 138 residues long: Small ribosomal subunit protein uS11c (138 aa).

The disordered stretch occupies residues Met-1–Arg-23. Residues Gly-9–Arg-23 are compositionally biased toward basic residues.

Belongs to the universal ribosomal protein uS11 family. Part of the 30S ribosomal subunit.

Its subcellular location is the plastid. It is found in the chloroplast. The sequence is that of Small ribosomal subunit protein uS11c from Cucumis sativus (Cucumber).